Reading from the N-terminus, the 143-residue chain is Large ribosomal subunit protein uL15 (143 aa).

The tract at residues 1 to 51 is disordered; the sequence is MELNGIKPAAGAKHAKRRVGRGIGSGIGKTAGRGHKGQKSRAGGFHKVGFE. Gly residues predominate over residues 21-31; that stretch reads RGIGSGIGKTA.

The protein belongs to the universal ribosomal protein uL15 family. In terms of assembly, part of the 50S ribosomal subunit.

Binds to the 23S rRNA. In Variovorax paradoxus (strain S110), this protein is Large ribosomal subunit protein uL15.